The sequence spans 295 residues: Serpentine receptor class gamma-53 (295 aa).

6 consecutive transmembrane segments (helical) span residues Ile-7–Ser-27, Val-39–Phe-61, Phe-121–Tyr-141, Cys-173–Val-193, Met-211–Thr-230, and Ile-241–Ile-261.

This sequence belongs to the nematode receptor-like protein srg family.

It is found in the membrane. The protein is Serpentine receptor class gamma-53 (srg-53) of Caenorhabditis elegans.